Here is a 329-residue protein sequence, read N- to C-terminus: Carbonic anhydrase (329 aa).

The tract at residues 1–108 (MSTASAFAIN…AAARIDQITA (108 aa)) is chloroplast transit peptide-like.

This sequence belongs to the beta-class carbonic anhydrase family. As to quaternary structure, homohexamer.

It localises to the cytoplasm. It carries out the reaction hydrogencarbonate + H(+) = CO2 + H2O. Reversible hydration of carbon dioxide. This chain is Carbonic anhydrase, found in Flaveria pringlei.